Here is a 750-residue protein sequence, read N- to C-terminus: Tyrosine-protein phosphatase 2 (750 aa).

The tract at residues 1-20 (MDRIAQQYRNGKRDNNGNRM) is disordered. Residue Ser-258 is modified to Phosphoserine. 2 disordered regions span residues 327 to 348 (LHQKQLSQKQRGPQSTDDSKLY) and 425 to 450 (VKLPHSPKPPAVSEASTTETKTDKSY). Residues 330–348 (KQLSQKQRGPQSTDDSKLY) are compositionally biased toward polar residues. One can recognise a Tyrosine-protein phosphatase domain in the interval 383–737 (SPSPLSSDDT…IACYEALLNY (355 aa)). The residue at position 430 (Ser-430) is a Phosphoserine. Residue Cys-666 is the Phosphocysteine intermediate of the active site.

It belongs to the protein-tyrosine phosphatase family. Non-receptor class subfamily. As to quaternary structure, interacts with HOG1.

The protein localises to the cytoplasm. The protein resides in the nucleus. It catalyses the reaction O-phospho-L-tyrosyl-[protein] + H2O = L-tyrosyl-[protein] + phosphate. In terms of biological role, major phosphatase responsible with PTP3 for tyrosine dephosphorylation of MAP kinase HOG1 to inactivate its activity. May also be involved in the regulation of MAP kinase FUS3. May be implicated in the ubiquitin-mediated protein degradation. This is Tyrosine-protein phosphatase 2 (PTP2) from Saccharomyces cerevisiae (strain ATCC 204508 / S288c) (Baker's yeast).